The following is a 357-amino-acid chain: Undecaprenyl-phosphate alpha-N-acetylglucosaminyl 1-phosphate transferase (357 aa).

7 consecutive transmembrane segments (helical) span residues 40 to 60 (GAIPLIGGVSLFVGNLCFYLL), 64 to 84 (QMRLPTLYLFSIFVLLVIGMI), 124 to 144 (FQLTLGSIGLIITVLATIAAI), 183 to 203 (WSFALIIAILPYFMMNLGIPF), 209 to 229 (VFMGDAGSTLIGFTIIWILLL), 238 to 258 (MNPVTALWIIAIPLIDMIAIM), and 291 to 311 (FLLITFAAAICATIGILGEIF).

This sequence belongs to the glycosyltransferase 4 family. WecA subfamily. Mg(2+) serves as cofactor. Mn(2+) is required as a cofactor.

Its subcellular location is the cell inner membrane. It carries out the reaction di-trans,octa-cis-undecaprenyl phosphate + UDP-N-acetyl-alpha-D-glucosamine = N-acetyl-alpha-D-glucosaminyl-di-trans,octa-cis-undecaprenyl diphosphate + UMP. It functions in the pathway bacterial outer membrane biogenesis; LPS O-antigen biosynthesis. Catalyzes the transfer of the GlcNAc-1-phosphate moiety from UDP-GlcNAc onto the carrier lipid undecaprenyl phosphate (C55-P), yielding GlcNAc-pyrophosphoryl-undecaprenyl (GlcNAc-PP-C55). This is Undecaprenyl-phosphate alpha-N-acetylglucosaminyl 1-phosphate transferase from Pasteurella multocida (strain Pm70).